A 368-amino-acid chain; its full sequence is Phospho-N-acetylmuramoyl-pentapeptide-transferase (368 aa).

The next 9 membrane-spanning stretches (helical) occupy residues 30–50 (AAAITALLISLMAGPWFIRYL), 72–92 (LPTMGGILIIFSIEVSVFLWA), 98–118 (HVWLVMLAIFWMGLIGFIDDY), 139–159 (ISLGLVIGLYTWFDPAFAVLL), 170–190 (LSIDYGIFYIPIVIFIITAVS), 201–221 (GLASGTTAIVVSALGAFSYLA), 238–258 (GGEIAVVCMAIVMACVGFLWF), 264–286 (EIIMGDTGSLALGSAVAVIALLI), and 345–365 (KIVIRFWIISILFFLTSLMTL).

Belongs to the glycosyltransferase 4 family. MraY subfamily. Mg(2+) is required as a cofactor.

It is found in the cell inner membrane. The enzyme catalyses UDP-N-acetyl-alpha-D-muramoyl-L-alanyl-gamma-D-glutamyl-meso-2,6-diaminopimeloyl-D-alanyl-D-alanine + di-trans,octa-cis-undecaprenyl phosphate = di-trans,octa-cis-undecaprenyl diphospho-N-acetyl-alpha-D-muramoyl-L-alanyl-D-glutamyl-meso-2,6-diaminopimeloyl-D-alanyl-D-alanine + UMP. Its pathway is cell wall biogenesis; peptidoglycan biosynthesis. Its function is as follows. Catalyzes the initial step of the lipid cycle reactions in the biosynthesis of the cell wall peptidoglycan: transfers peptidoglycan precursor phospho-MurNAc-pentapeptide from UDP-MurNAc-pentapeptide onto the lipid carrier undecaprenyl phosphate, yielding undecaprenyl-pyrophosphoryl-MurNAc-pentapeptide, known as lipid I. This Chlorobium phaeobacteroides (strain DSM 266 / SMG 266 / 2430) protein is Phospho-N-acetylmuramoyl-pentapeptide-transferase.